The sequence spans 292 residues: 33 kDa chaperonin (292 aa).

2 disulfide bridges follow: Cys230–Cys232 and Cys263–Cys266.

Belongs to the HSP33 family. Under oxidizing conditions two disulfide bonds are formed involving the reactive cysteines. Under reducing conditions zinc is bound to the reactive cysteines and the protein is inactive.

The protein localises to the cytoplasm. In terms of biological role, redox regulated molecular chaperone. Protects both thermally unfolding and oxidatively damaged proteins from irreversible aggregation. Plays an important role in the bacterial defense system toward oxidative stress. This chain is 33 kDa chaperonin, found in Enterobacter sp. (strain 638).